A 92-amino-acid chain; its full sequence is Small ribosomal subunit protein uS19 (92 aa).

This sequence belongs to the universal ribosomal protein uS19 family.

Functionally, protein S19 forms a complex with S13 that binds strongly to the 16S ribosomal RNA. The protein is Small ribosomal subunit protein uS19 of Vibrio atlanticus (strain LGP32) (Vibrio splendidus (strain Mel32)).